We begin with the raw amino-acid sequence, 301 residues long: Protoheme IX farnesyltransferase (301 aa).

9 helical membrane passes run 20 to 42, 55 to 75, 105 to 125, 126 to 146, 150 to 172, 176 to 198, 227 to 247, 249 to 269, and 280 to 300; these read FTELVKIGIVNSNTITAFTGMWL, VDVIFFTIVGSALIVAASGAF, ALMVALVLGVVGTIMLFMTTW, QAGVLGVIGVFLYVVVYSLYA, LVSNTVIGSFSGAVPPLIGWFAV, FSIVPIMLFLVMFCWQPPHFYAI, MFFWVILLTVLPFFMFDLGLV, VILATLLNIGWLALSIYGFKM, and FVYSLNYMTILFVAMVVISIF.

It belongs to the UbiA prenyltransferase family. Protoheme IX farnesyltransferase subfamily. As to quaternary structure, interacts with CtaA.

It localises to the cell membrane. The enzyme catalyses heme b + (2E,6E)-farnesyl diphosphate + H2O = Fe(II)-heme o + diphosphate. It participates in porphyrin-containing compound metabolism; heme O biosynthesis; heme O from protoheme: step 1/1. In terms of biological role, converts heme B (protoheme IX) to heme O by substitution of the vinyl group on carbon 2 of heme B porphyrin ring with a hydroxyethyl farnesyl side group. The polypeptide is Protoheme IX farnesyltransferase (Listeria innocua serovar 6a (strain ATCC BAA-680 / CLIP 11262)).